A 161-amino-acid chain; its full sequence is Cytochrome c-type biogenesis protein CcmE (161 aa).

Over 1 to 8 the chain is Cytoplasmic; the sequence is MNARRKKR. A helical; Signal-anchor for type II membrane protein transmembrane segment spans residues 9 to 29; sequence LTLAVALIGGVAAIASLLLYA. The Periplasmic portion of the chain corresponds to 30-161; it reads LNSNLNLFYT…DYNEQQKTSY (132 aa). Positions 131 and 135 each coordinate heme.

It belongs to the CcmE/CycJ family.

The protein resides in the cell inner membrane. In terms of biological role, heme chaperone required for the biogenesis of c-type cytochromes. Transiently binds heme delivered by CcmC and transfers the heme to apo-cytochromes in a process facilitated by CcmF and CcmH. The polypeptide is Cytochrome c-type biogenesis protein CcmE (Shewanella sediminis (strain HAW-EB3)).